A 173-amino-acid polypeptide reads, in one-letter code: Co-chaperone protein HscB (173 aa).

One can recognise a J domain in the interval Asp-2–Leu-74.

The protein belongs to the HscB family. In terms of assembly, interacts with HscA and stimulates its ATPase activity. Interacts with IscU.

In terms of biological role, co-chaperone involved in the maturation of iron-sulfur cluster-containing proteins. Seems to help targeting proteins to be folded toward HscA. The chain is Co-chaperone protein HscB from Proteus mirabilis (strain HI4320).